The following is a 352-amino-acid chain: 4-hydroxy-2-oxovalerate aldolase 5 (352 aa).

Residues 9 to 261 (IRVTDSSLRD…RTGIDTLKII (253 aa)) form the Pyruvate carboxyltransferase domain. Residue 17–18 (RD) coordinates substrate. Asp-18 serves as a coordination point for Mn(2+). The active-site Proton acceptor is His-21. Residues Ser-171 and His-200 each coordinate substrate. Residues His-200 and His-202 each contribute to the Mn(2+) site. Residue Tyr-291 coordinates substrate.

This sequence belongs to the 4-hydroxy-2-oxovalerate aldolase family.

The catalysed reaction is (S)-4-hydroxy-2-oxopentanoate = acetaldehyde + pyruvate. This is 4-hydroxy-2-oxovalerate aldolase 5 from Rhodococcus opacus (strain B4).